We begin with the raw amino-acid sequence, 221 residues long: Toll/interleukin-1 receptor domain-containing adapter protein (221 aa).

Positions 1–82 are disordered; it reads MASSTSLPAP…HASDSGSSRW (82 aa). Residues 48–67 are compositionally biased toward low complexity; that stretch reads SQPTSQDSPLPPSLSSVTSP. The region spanning 84 to 213 is the TIR domain; it reads KDYDVCVCHS…GGFRQVKEAV (130 aa). Cystine bridges form between Cys-89/Cys-134 and Cys-142/Cys-174.

In terms of assembly, homodimer. Also forms heterodimers with MYD88. May interact with PIK3AP1. Interacts with TLR4 and IRAK2 via their respective TIR domains. Interacts with BMX and TBK1. Interacts with EIF2AK2. Does not interact with IRAK1, nor TLR9. Interacts with TLR2. Interacts with RAGE/AGER. As to quaternary structure, (Microbial infection) In case of infection, interacts with B.melitensis protein TcpB (AC Q8YF53); TcpB abolishes the TLR4-TIRAP interaction and downstream signaling. In terms of processing, phosphorylated by IRAK1 and IRAK4. Also phosphorylated by BTK. Post-translationally, polyubiquitinated. Polyubiquitination follows phosphorylation by BTK and leads to TIRAP degradation. Highly expressed in liver, kidney, spleen, skeletal muscle and heart. Also detected in peripheral blood leukocytes, lung, placenta, small intestine, thymus, colon and brain.

Its subcellular location is the cytoplasm. It localises to the cell membrane. The protein resides in the membrane. Functionally, adapter involved in TLR2, TLR4 and RAGE signaling pathways in the innate immune response. Acts via IRAK2 and TRAF-6, leading to the activation of NF-kappa-B, MAPK1, MAPK3 and JNK, and resulting in cytokine secretion and the inflammatory response. Positively regulates the production of TNF-alpha (TNF) and interleukin-6 (IL6). This Homo sapiens (Human) protein is Toll/interleukin-1 receptor domain-containing adapter protein (TIRAP).